The primary structure comprises 200 residues: Casparian strip membrane protein 1 (200 aa).

At Met1–Gly38 the chain is on the cytoplasmic side. The chain crosses the membrane as a helical span at residues Leu39 to Ala59. The Extracellular portion of the chain corresponds to Thr60–Thr86. Residues Phe87 to Phe107 traverse the membrane as a helical segment. Topologically, residues Ser108–Arg121 are cytoplasmic. Residues Leu122–Ala142 form a helical membrane-spanning segment. Over Ala143–Glu171 the chain is Extracellular. A helical transmembrane segment spans residues Val172 to Leu192. The Cytoplasmic portion of the chain corresponds to Ser193–His200.

It belongs to the Casparian strip membrane proteins (CASP) family. As to quaternary structure, homodimer and heterodimers.

The protein localises to the cell membrane. Its function is as follows. Regulates membrane-cell wall junctions and localized cell wall deposition. Required for establishment of the Casparian strip membrane domain (CSD) and the subsequent formation of Casparian strips, a cell wall modification of the root endodermis that determines an apoplastic barrier between the intraorganismal apoplasm and the extraorganismal apoplasm and prevents lateral diffusion. In Theobroma cacao (Cacao), this protein is Casparian strip membrane protein 1.